The sequence spans 264 residues: 3-methyl-2-oxobutanoate hydroxymethyltransferase (264 aa).

Positions 45 and 84 each coordinate Mg(2+). Residues 45–46 (DS), Asp-84, and Lys-112 each bind 3-methyl-2-oxobutanoate. Glu-114 lines the Mg(2+) pocket. Glu-181 serves as the catalytic Proton acceptor.

The protein belongs to the PanB family. Homodecamer; pentamer of dimers. It depends on Mg(2+) as a cofactor.

Its subcellular location is the cytoplasm. It catalyses the reaction 3-methyl-2-oxobutanoate + (6R)-5,10-methylene-5,6,7,8-tetrahydrofolate + H2O = 2-dehydropantoate + (6S)-5,6,7,8-tetrahydrofolate. It functions in the pathway cofactor biosynthesis; (R)-pantothenate biosynthesis; (R)-pantoate from 3-methyl-2-oxobutanoate: step 1/2. Functionally, catalyzes the reversible reaction in which hydroxymethyl group from 5,10-methylenetetrahydrofolate is transferred onto alpha-ketoisovalerate to form ketopantoate. This Pseudoalteromonas translucida (strain TAC 125) protein is 3-methyl-2-oxobutanoate hydroxymethyltransferase.